The following is a 162-amino-acid chain: Transcription elongation factor GreA (162 aa).

Residues 46–77 (RENAEYKAAREEQTRLNNMVTRLQEEIERAQV) are a coiled coil.

The protein belongs to the GreA/GreB family.

Necessary for efficient RNA polymerase transcription elongation past template-encoded arresting sites. The arresting sites in DNA have the property of trapping a certain fraction of elongating RNA polymerases that pass through, resulting in locked ternary complexes. Cleavage of the nascent transcript by cleavage factors such as GreA or GreB allows the resumption of elongation from the new 3'terminus. GreA releases sequences of 2 to 3 nucleotides. The polypeptide is Transcription elongation factor GreA (Treponema pallidum (strain Nichols)).